We begin with the raw amino-acid sequence, 92 residues long: Small ribosomal subunit protein uS19c (92 aa).

A disordered region spans residues Glu-73–Arg-92. Residues Tyr-80–Arg-92 are compositionally biased toward basic residues.

This sequence belongs to the universal ribosomal protein uS19 family.

It localises to the plastid. The protein localises to the chloroplast. Protein S19 forms a complex with S13 that binds strongly to the 16S ribosomal RNA. This Chlamydomonas reinhardtii (Chlamydomonas smithii) protein is Small ribosomal subunit protein uS19c (rps19).